The primary structure comprises 250 residues: Flavin-dependent thymidylate synthase (250 aa).

The ThyX domain occupies 7–233 (LRVQLIAKTD…PSIFGDFDIA (227 aa)). Residues serine 71, 95-97 (RHR), and glutamine 103 each bind FAD. DUMP-binding positions include 92 to 95 (ELIR), 103 to 107 (QLSQR), and arginine 172. The short motif at 95-105 (RHRHFSYSQLS) is the ThyX motif element. FAD contacts are provided by residues 188–190 (NYR) and histidine 194. Position 199 (arginine 199) interacts with dUMP. Arginine 199 serves as the catalytic Involved in ionization of N3 of dUMP, leading to its activation.

This sequence belongs to the thymidylate synthase ThyX family. In terms of assembly, homotetramer. Requires FAD as cofactor.

It carries out the reaction dUMP + (6R)-5,10-methylene-5,6,7,8-tetrahydrofolate + NADPH + H(+) = dTMP + (6S)-5,6,7,8-tetrahydrofolate + NADP(+). The protein operates within pyrimidine metabolism; dTTP biosynthesis. Functionally, catalyzes the reductive methylation of 2'-deoxyuridine-5'-monophosphate (dUMP) to 2'-deoxythymidine-5'-monophosphate (dTMP) while utilizing 5,10-methylenetetrahydrofolate (mTHF) as the methyl donor, and NADPH and FADH(2) as the reductant. This Mycobacteroides abscessus (strain ATCC 19977 / DSM 44196 / CCUG 20993 / CIP 104536 / JCM 13569 / NCTC 13031 / TMC 1543 / L948) (Mycobacterium abscessus) protein is Flavin-dependent thymidylate synthase.